The following is a 629-amino-acid chain: ATP-dependent RNA helicase DBP6 (629 aa).

The tract at residues 1 to 129 is disordered; sequence MFASRFDPSQ…GIEDEAASTH (129 aa). Acidic residues predominate over residues 72–84; the sequence is ASEEDSSEVEEEE. Phosphoserine is present on residues serine 73, serine 77, and serine 78. Over residues 88 to 103 the composition is skewed to polar residues; the sequence is STHSTVLSRFKQTVSL. Over residues 116–125 the composition is skewed to acidic residues; it reads KEDEGIEDEA. The Q motif signature appears at 197–205; sequence TFPIQSIIL. Residues 221 to 401 form the Helicase ATP-binding domain; that stretch reads RNFTRRIGDI…GLNLYKPKLF (181 aa). An ATP-binding site is contributed by 234 to 241; the sequence is AATGSGKT. Residues 341–344 carry the DEAD box motif; the sequence is DEAD. The Helicase C-terminal domain maps to 437 to 603; the sequence is SICQFMAHSP…SVQPLELDFT (167 aa).

This sequence belongs to the DEAD box helicase family. DDX51/DBP6 subfamily. As to quaternary structure, associated with pre-ribosomal particles. Interacts with DBP9 and RSA3. Together with NOP8, URB1, URB2 and RSA3, forms an RNA-independent complex, which is required during early maturation of nascent 60S ribosomal subunits.

Its subcellular location is the nucleus. The protein localises to the nucleolus. It carries out the reaction ATP + H2O = ADP + phosphate + H(+). Functionally, ATP-binding RNA helicase involved in the biogenesis of 60S ribosomal subunits and is required for the normal formation of 25S and 5.8S rRNAs. The protein is ATP-dependent RNA helicase DBP6 (DBP6) of Saccharomyces cerevisiae (strain ATCC 204508 / S288c) (Baker's yeast).